The sequence spans 156 residues: Isotocin-neurophysin IT 2 (156 aa).

A signal peptide spans Met-1 to Ala-19. An intrachain disulfide couples Cys-20 to Cys-25. Gly-28 bears the Glycine amide mark. 7 cysteine pairs are disulfide-bonded: Cys-41/Cys-85, Cys-44/Cys-58, Cys-52/Cys-75, Cys-59/Cys-65, Cys-92/Cys-105, Cys-99/Cys-117, and Cys-106/Cys-111.

This sequence belongs to the vasopressin/oxytocin family. Seven disulfide bonds are present in neurophysin.

The protein localises to the secreted. Functionally, isotocin causes contraction of smooth muscles. The protein is Isotocin-neurophysin IT 2 of Oncorhynchus keta (Chum salmon).